A 152-amino-acid polypeptide reads, in one-letter code: Cornifin-A (152 aa).

Residues 20–40 form a disordered region; the sequence is EVKQPCQPPPQEPCAPKTKEP. 14 consecutive repeat copies span residues 27-34, 35-42, 43-49, 50-57, 58-65, 66-73, 74-81, 82-89, 90-97, 98-105, 106-113, 114-121, 122-129, and 130-137. The tract at residues 27–137 is 14 X 8 AA approximate tandem repeats; sequence PPPQEPCAPK…CQPVVPEPCP (111 aa).

Belongs to the cornifin (SPRR) family. In squamous epithelia lining the nasal vestibule and in the hard palate.

Its subcellular location is the cytoplasm. Its function is as follows. Cross-linked envelope protein of keratinocytes. It is a keratinocyte protein that first appears in the cell cytosol, but ultimately becomes cross-linked to membrane proteins by transglutaminase. All that results in the formation of an insoluble envelope beneath the plasma membrane. The polypeptide is Cornifin-A (Sprr1a) (Rattus norvegicus (Rat)).